Reading from the N-terminus, the 233-residue chain is Purine nucleoside phosphorylase DeoD-type (233 aa).

Histidine 4 contacts a purine D-ribonucleoside. Residues glycine 20, arginine 24, arginine 43, and arginine 87–threonine 90 contribute to the phosphate site. Residues glutamate 178 to glutamate 180 and serine 202 to aspartate 203 each bind a purine D-ribonucleoside. Aspartate 203 serves as the catalytic Proton donor.

This sequence belongs to the PNP/UDP phosphorylase family. Homohexamer; trimer of homodimers.

It carries out the reaction a purine D-ribonucleoside + phosphate = a purine nucleobase + alpha-D-ribose 1-phosphate. The enzyme catalyses a purine 2'-deoxy-D-ribonucleoside + phosphate = a purine nucleobase + 2-deoxy-alpha-D-ribose 1-phosphate. In terms of biological role, catalyzes the reversible phosphorolytic breakdown of the N-glycosidic bond in the beta-(deoxy)ribonucleoside molecules, with the formation of the corresponding free purine bases and pentose-1-phosphate. The sequence is that of Purine nucleoside phosphorylase DeoD-type from Listeria monocytogenes serotype 4b (strain CLIP80459).